The chain runs to 514 residues: Beta-secretase 2 (514 aa).

The signal sequence occupies residues 1 to 19; sequence MGALLRALLLLVLAQWLLS. A propeptide spanning residues 20–62 is cleaved from the precursor; that stretch reads AVPALAPAPFTLPLQVAGATNHRASAVPGLGTPELPRADGLAL. The Extracellular portion of the chain corresponds to 20–469; the sequence is AVPALAPAPF…NEPILWIVSY (450 aa). Residues 88 to 425 form the Peptidase A1 domain; that stretch reads YYLEMLIGTP…DRAQRRVGFA (338 aa). Residue Asp106 is part of the active site. Residue Asn166 is glycosylated (N-linked (GlcNAc...) asparagine). Intrachain disulfides connect Cys229–Cys429, Cys288–Cys453, and Cys340–Cys389. Asp299 is a catalytic residue. A glycan (N-linked (GlcNAc...) asparagine) is linked at Asn362. Residues 470–490 traverse the membrane as a helical segment; it reads ALMSVCGAILLVLILLLLLPL. The Cytoplasmic segment spans residues 491 to 514; that stretch reads HCRHAPRDPEVVNDESSLVRHRWK.

This sequence belongs to the peptidase A1 family. Monomer. Interacts with RTN3 and RTN4. Post-translationally, undergoes autoproteolytic cleavage. Glycosylated. In terms of tissue distribution, high expression in pancreatic islets. Expressed at much lower levels in the pituitary, colon, and ovaries and is nearly absent from all the other tissues.

The protein resides in the cell membrane. It localises to the golgi apparatus. The protein localises to the endoplasmic reticulum. Its subcellular location is the endosome. It is found in the melanosome. It catalyses the reaction Broad endopeptidase specificity. Cleaves Glu-Val-Asn-Leu-|-Asp-Ala-Glu-Phe in the Swedish variant of Alzheimer's amyloid precursor protein.. In terms of biological role, responsible for the proteolytic processing of the amyloid precursor protein (APP). Cleaves APP, between residues 690 and 691, leading to the generation and extracellular release of beta-cleaved soluble APP, and a corresponding cell-associated C-terminal fragment which is later released by gamma-secretase. It has also been shown that it can cleave APP between residues 671 and 672. Involved in the proteolytic shedding of PMEL at early stages of melanosome biogenesis. Cleaves PMEL within the M-beta fragment to release the amyloidogenic PMEL luminal fragment containing M-alpha and a small portion of M-beta N-terminus. This is a prerequisite step for subsequent processing and assembly of PMEL fibrils into amyloid sheets. Responsible also for the proteolytic processing of CLTRN in pancreatic beta cells. The sequence is that of Beta-secretase 2 (Bace2) from Mus musculus (Mouse).